Reading from the N-terminus, the 336-residue chain is DNA repair protein Rad51 homolog (336 aa).

Positions M1 to Q10 are enriched in polar residues. Positions M1–L20 are disordered. Residue G124–T131 coordinates ATP.

Belongs to the RecA family. RAD51 subfamily. As to quaternary structure, interacts with Rrp6; the interaction is required for the recruitment of spn-A to the DNA-damage response foci. Highly expressed in ovaries.

It localises to the nucleus. It is found in the cytoplasm. Plays an important role in homologous strand exchange, a key step in DNA repair through homologous recombination (HR). Binds to single and double-stranded DNA and exhibits DNA-dependent ATPase activity. Underwinds duplex DNA. Spindle genes are required for each of the symmetry-breaking steps that generate polarity during egg axis formation; oocyte positioning at the posterior of the cyst to generate the first AP polarity and inhibition of gurken (grk) signaling to the follicle cell layer to polarize first the AP axis and then DV axis. May have a role in female meiosis. The protein is DNA repair protein Rad51 homolog (spn-A) of Drosophila melanogaster (Fruit fly).